We begin with the raw amino-acid sequence, 327 residues long: MNAYERITRNTAEVVTEEEVRELAEDPEGKRVYVGYEPSGVLHLGHLLTANKLMDLQDAGMEVVVLLADVHAYLNDKGSFEEIRATADQMKAQFLAYGLDEDQTEFVLGSSFQLDEDYELDLHAMQVETSLKRAQRAMAEIQSGETPKVSHVVYPLMQALDIEYLDLDLAIGGMDQRKVHMLAREELPSVGYEKRPVLHTPIIGDLGSGDGKMSSSEGVTISMEDSTADIEEKVTGAFCPQTRDPEGETVNPVLELFQYHVFPRFDEVVVQRPDEYGGDLVYESYEDLADDLESGELHPADAKGALAAALDELIEPGRQRLREIRGE.

Tyr-33 contributes to the L-tyrosine binding site. The 'HIGH' region signature appears at 38-46; sequence PSGVLHLGH. Tyr-154, Gln-158, Asp-161, and Gln-176 together coordinate L-tyrosine. The short motif at 212-216 is the 'KMSKS' region element; sequence KMSSS. An ATP-binding site is contributed by Ser-215.

This sequence belongs to the class-I aminoacyl-tRNA synthetase family. TyrS type 3 subfamily. As to quaternary structure, homodimer.

It localises to the cytoplasm. The catalysed reaction is tRNA(Tyr) + L-tyrosine + ATP = L-tyrosyl-tRNA(Tyr) + AMP + diphosphate + H(+). Its function is as follows. Catalyzes the attachment of tyrosine to tRNA(Tyr) in a two-step reaction: tyrosine is first activated by ATP to form Tyr-AMP and then transferred to the acceptor end of tRNA(Tyr). In Halobacterium salinarum (strain ATCC 29341 / DSM 671 / R1), this protein is Tyrosine--tRNA ligase.